Consider the following 515-residue polypeptide: Maturase K (515 aa).

It belongs to the intron maturase 2 family. MatK subfamily.

It localises to the plastid. Its subcellular location is the chloroplast. Usually encoded in the trnK tRNA gene intron. Probably assists in splicing its own and other chloroplast group II introns. The chain is Maturase K from Pinus sibirica (Siberian pine).